We begin with the raw amino-acid sequence, 69 residues long: uncharacterized protein (69 aa).

Residues 1-21 (MELLIPLSLLGLYLFSGTRDS) form the signal peptide. Asn-41 carries an N-linked (GlcNAc...) asparagine glycan.

It is found in the secreted. This is an uncharacterized protein from Dictyostelium discoideum (Social amoeba).